The primary structure comprises 84 residues: Toxin Cex12 (84 aa).

Residues Met-1–Ala-19 form the signal peptide. In terms of domain architecture, LCN-type CS-alpha/beta spans Asn-20–Arg-83. 4 disulfide bridges follow: Cys-31–Cys-82, Cys-35–Cys-58, Cys-44–Cys-63, and Cys-48–Cys-65.

This sequence belongs to the long (4 C-C) scorpion toxin superfamily. Sodium channel inhibitor family. Beta subfamily. Expressed by the venom gland.

It localises to the secreted. In terms of biological role, beta toxins bind voltage-independently at site-4 of sodium channels (Nav) and shift the voltage of activation toward more negative potentials thereby affecting sodium channel activation and promoting spontaneous and repetitive firing. This is Toxin Cex12 from Centruroides exilicauda (Bark scorpion).